The sequence spans 337 residues: MLRQIGEFYHQGEKDDTSRVWMTCWHHGGRILASCGDDKAVRVWSLVGEPDSKMRLECRTTLDDSHTRAVRSVAFSNDGKCLVSASFDASVVVYQQEDGEFAEVNKLEGHESEVKCAVFSKSDEFLATCSRDKSVWFWQQDEDEDFSVSSILQPHTQDVKQVAWHPTEDLLVSCSYDSSIRFYRFDGEDWVTQQKIDGCHVGTVWSIAFDTEGHRLVTVGEDHCIQLFVRENIGSKSADQDTWKSVARYDVENTRWPLYSVAWNSTNDVIATGGGDCKIRLFKISSTPESPVIEHLGVVGRHELDVNHVAWNPNPKFSNLLTSASDDGTIRLWELEI.

WD repeat units lie at residues aspartate 15 to methionine 54, serine 65 to valine 104, glycine 109 to valine 148, proline 154 to glutamine 193, cysteine 199 to alanine 238, asparagine 253 to valine 292, and arginine 301 to isoleucine 337.

It belongs to the WD repeat CIA1 family.

Essential component of the cytosolic iron-sulfur (Fe/S) protein assembly machinery. Required for the maturation of extramitochondrial Fe/S proteins. The polypeptide is Probable cytosolic iron-sulfur protein assembly protein CIAO1 homolog (Caenorhabditis elegans).